The primary structure comprises 83 residues: MVTIRLARGGAKKRPFYNIVVADSRNARDGRFIERVGFFNPLARGQEETLRLDLDRVEHWVATGAATSERVAKLIKDARKAVA.

Belongs to the bacterial ribosomal protein bS16 family.

This chain is Small ribosomal subunit protein bS16, found in Shewanella frigidimarina (strain NCIMB 400).